The following is a 152-amino-acid chain: Ribosome maturation factor RimP (152 aa).

This sequence belongs to the RimP family.

Its subcellular location is the cytoplasm. Required for maturation of 30S ribosomal subunits. The polypeptide is Ribosome maturation factor RimP (Stutzerimonas stutzeri (strain A1501) (Pseudomonas stutzeri)).